Consider the following 89-residue polypeptide: Alpha-latrotoxin associated low molecular weight protein SGV242-280 (89 aa).

A signal peptide spans 1–18 (MSKLHFLILLSVIVSVFC).

It belongs to the arthropod CHH/MIH/GIH/VIH hormone family. In terms of tissue distribution, expressed by the venom gland.

The protein localises to the secreted. Functionally, may increase the toxicity of alpha-latrotoxin and/or other venom components. Is non-toxic to mice and to the cockroach Periplaneta americana. This Steatoda grossa (False black widow) protein is Alpha-latrotoxin associated low molecular weight protein SGV242-280.